Here is a 226-residue protein sequence, read N- to C-terminus: Acyl-homoserine-lactone synthase (226 aa).

This sequence belongs to the autoinducer synthase family.

The enzyme catalyses a fatty acyl-[ACP] + S-adenosyl-L-methionine = an N-acyl-L-homoserine lactone + S-methyl-5'-thioadenosine + holo-[ACP] + H(+). Required for the synthesis of OHHL (N-(3-oxohexanoyl)-L-homoserine lactone), an autoinducer molecule. This chain is Acyl-homoserine-lactone synthase (psyI), found in Pseudomonas amygdali pv. tabaci (Pseudomonas syringae pv. tabaci).